We begin with the raw amino-acid sequence, 200 residues long: Endoribonuclease YbeY (200 aa).

3 residues coordinate Zn(2+): His-120, His-124, and His-130.

The protein belongs to the endoribonuclease YbeY family. It depends on Zn(2+) as a cofactor.

It localises to the cytoplasm. In terms of biological role, single strand-specific metallo-endoribonuclease involved in late-stage 70S ribosome quality control and in maturation of the 3' terminus of the 16S rRNA. This Corynebacterium efficiens (strain DSM 44549 / YS-314 / AJ 12310 / JCM 11189 / NBRC 100395) protein is Endoribonuclease YbeY.